The chain runs to 81 residues: Sulfur carrier protein TusA (81 aa).

The active-site Cysteine persulfide intermediate is Cys20.

This sequence belongs to the sulfur carrier protein TusA family.

The protein localises to the cytoplasm. Sulfur carrier protein which probably makes part of a sulfur-relay system. This Colwellia psychrerythraea (strain 34H / ATCC BAA-681) (Vibrio psychroerythus) protein is Sulfur carrier protein TusA.